A 604-amino-acid polypeptide reads, in one-letter code: MRPMTPRDKIRNFSIIAHIDHGKSTLADRLIQACGGLTDREMSEQVLDSMDIEKERGITIKAQTVRLSYTASDGETYTLNLMDTPGHVDFAYEVSRCLAACEGSLLVVDASQGVEAQTLANVYQAIDQNHEIVPVLNKIDLPAADVDRVKEQIEEIIGLDASDAVQISAKTGLGIPDVLEAIVNRLPPPRGGDHTAPLKAALVDAYYDPYLGVVVIVRVHEGILKKKQTIRMMRTGGVYEIDKVGTFNPKLTEADALGPGEVGYFVASIKEVGDCSIGDTITEDKRPTDKALPGYKDVQPVVFCGLFPMDAGDFDDLRAAMGKLRLNDASFTWEMETSAALGMGFRCGFLGLLHLEIIQERLSREFDLDLIATAPSVVYEMSMTDGTEIELHNPADMPDVVRITEIREPWIAATIYTPDEYLGSILKLCQDRRGIQIELSYVGGRACVKYELPLNEVVFDFYDRLKSISRGYASFDYTLIGHRAENLVKLQILVNEEPVDALAMLVHRDRAESRGRQMCERLKELIPRQMFKIPIQAAIGGRVVARETISAMRKDVTAKCYGGDATRKRKLLDKQAAGKKRMRQFGKVEIPQEAFVAALRMDGD.

One can recognise a tr-type G domain in the interval 8–190; it reads DKIRNFSIIA…AIVNRLPPPR (183 aa). Residues 20–25 and 137–140 each bind GTP; these read DHGKST and NKID.

It belongs to the TRAFAC class translation factor GTPase superfamily. Classic translation factor GTPase family. LepA subfamily.

It is found in the cell inner membrane. The enzyme catalyses GTP + H2O = GDP + phosphate + H(+). Its function is as follows. Required for accurate and efficient protein synthesis under certain stress conditions. May act as a fidelity factor of the translation reaction, by catalyzing a one-codon backward translocation of tRNAs on improperly translocated ribosomes. Back-translocation proceeds from a post-translocation (POST) complex to a pre-translocation (PRE) complex, thus giving elongation factor G a second chance to translocate the tRNAs correctly. Binds to ribosomes in a GTP-dependent manner. This Hyphomonas neptunium (strain ATCC 15444) protein is Elongation factor 4.